A 344-amino-acid polypeptide reads, in one-letter code: MRIELLNTPVDAVELRIEDQIRPRRMEDFTGQQRLTDNLKVFISAARMRGDALDHVLLSGPPGLGKTTLAHIIAEEMGGSLKATSGPMLDKAGNLAGILTSLQKGDVLFIDEIHRMPPAVEEYLYSAMEDFRIDIMLDSGPSARAVQLKVEPFTLVGATTRSGLLTAPLRARFGISNRFDYYPPELLETILMRSSTILGIGIERDAASEIAGRSRGTPRIANRLLRRARDFAQVDGMEIISRPTAMKTLDSLEIDEEGLDEMDKKIMDAVVNRFSGGPVGVGSLAVSVGEEQDTIEEVYEPYLIQAGYLSRTPRGRVATQRALLRFSDGSSALRGTLFDGQEHV.

The large ATPase domain (RuvB-L) stretch occupies residues 1 to 182 (MRIELLNTPV…FGISNRFDYY (182 aa)). ATP contacts are provided by residues Ile-21, Arg-22, Gly-63, Lys-66, Thr-67, Thr-68, 129-131 (EDF), Arg-172, Tyr-182, and Arg-219. Thr-67 contacts Mg(2+). Residues 183–253 (PPELLETILM…TAMKTLDSLE (71 aa)) form a small ATPAse domain (RuvB-S) region. Residues 256-344 (EEGLDEMDKK…GTLFDGQEHV (89 aa)) are head domain (RuvB-H). Residues Arg-311 and Arg-316 each contribute to the DNA site.

It belongs to the RuvB family. Homohexamer. Forms an RuvA(8)-RuvB(12)-Holliday junction (HJ) complex. HJ DNA is sandwiched between 2 RuvA tetramers; dsDNA enters through RuvA and exits via RuvB. An RuvB hexamer assembles on each DNA strand where it exits the tetramer. Each RuvB hexamer is contacted by two RuvA subunits (via domain III) on 2 adjacent RuvB subunits; this complex drives branch migration. In the full resolvosome a probable DNA-RuvA(4)-RuvB(12)-RuvC(2) complex forms which resolves the HJ.

The protein resides in the cytoplasm. The enzyme catalyses ATP + H2O = ADP + phosphate + H(+). Functionally, the RuvA-RuvB-RuvC complex processes Holliday junction (HJ) DNA during genetic recombination and DNA repair, while the RuvA-RuvB complex plays an important role in the rescue of blocked DNA replication forks via replication fork reversal (RFR). RuvA specifically binds to HJ cruciform DNA, conferring on it an open structure. The RuvB hexamer acts as an ATP-dependent pump, pulling dsDNA into and through the RuvAB complex. RuvB forms 2 homohexamers on either side of HJ DNA bound by 1 or 2 RuvA tetramers; 4 subunits per hexamer contact DNA at a time. Coordinated motions by a converter formed by DNA-disengaged RuvB subunits stimulates ATP hydrolysis and nucleotide exchange. Immobilization of the converter enables RuvB to convert the ATP-contained energy into a lever motion, pulling 2 nucleotides of DNA out of the RuvA tetramer per ATP hydrolyzed, thus driving DNA branch migration. The RuvB motors rotate together with the DNA substrate, which together with the progressing nucleotide cycle form the mechanistic basis for DNA recombination by continuous HJ branch migration. Branch migration allows RuvC to scan DNA until it finds its consensus sequence, where it cleaves and resolves cruciform DNA. The sequence is that of Holliday junction branch migration complex subunit RuvB from Chlorobium luteolum (strain DSM 273 / BCRC 81028 / 2530) (Pelodictyon luteolum).